The following is a 509-amino-acid chain: Ethanolamine-phosphate phospho-lyase (509 aa).

An N6-(pyridoxal phosphate)lysine modification is found at Lys-279. Over residues 451 to 474 (EKTSAKRKVHNENSGDTNAKEKET) the composition is skewed to basic and acidic residues. The tract at residues 451–509 (EKTSAKRKVHNENSGDTNAKEKETCSSNSQERNPNDHAYRQSNGLHPESPTFTRKRIRT) is disordered.

This sequence belongs to the class-III pyridoxal-phosphate-dependent aminotransferase family. In terms of assembly, homotetramer. It depends on pyridoxal 5'-phosphate as a cofactor.

It localises to the mitochondrion. The enzyme catalyses phosphoethanolamine + H2O = acetaldehyde + NH4(+) + phosphate. Catalyzes the pyridoxal-phosphate-dependent breakdown of phosphoethanolamine, converting it to ammonia, inorganic phosphate and acetaldehyde. The protein is Ethanolamine-phosphate phospho-lyase (etnppl) of Xenopus laevis (African clawed frog).